The following is a 497-amino-acid chain: Glycerol kinase 2 (497 aa).

Position 13 (T13) interacts with ADP. Residues T13, T14, and S15 each coordinate ATP. T13 is a binding site for sn-glycerol 3-phosphate. An ADP-binding site is contributed by R17. The sn-glycerol 3-phosphate site is built by R83, E84, Y134, and D241. 5 residues coordinate glycerol: R83, E84, Y134, D241, and Q242. ADP is bound by residues T263 and G305. Positions 263, 305, 309, and 406 each coordinate ATP. ADP contacts are provided by G406 and N410.

The protein belongs to the FGGY kinase family.

The enzyme catalyses glycerol + ATP = sn-glycerol 3-phosphate + ADP + H(+). It functions in the pathway polyol metabolism; glycerol degradation via glycerol kinase pathway; sn-glycerol 3-phosphate from glycerol: step 1/1. Key enzyme in the regulation of glycerol uptake and metabolism. Catalyzes the phosphorylation of glycerol to yield sn-glycerol 3-phosphate. The chain is Glycerol kinase 2 from Sulfolobus acidocaldarius (strain ATCC 33909 / DSM 639 / JCM 8929 / NBRC 15157 / NCIMB 11770).